Here is a 971-residue protein sequence, read N- to C-terminus: Translation initiation factor IF-2 (971 aa).

The segment covering 49 to 63 (HLRKSHGATDGDKRK) has biased composition (basic and acidic residues). 2 disordered regions span residues 49–86 (HLRKSHGATDGDKRKITLTRKHTSEIKQSDATGKARTI) and 101–385 (DVAE…APTE). Positions 105–114 (GAEQGQAQVA) are enriched in low complexity. The span at 121-177 (ELKRREEEARREAELLEKQAQELRERQERLEREEAERRAREEAAEAQRRRAEEEAAA) shows a compositional bias: basic and acidic residues. Residues 178-209 (KRAAAAAVEAQQVAAQQAAEAQQETAGAQSAQ) show a composition bias toward low complexity. A compositionally biased stretch (basic and acidic residues) spans 210–261 (DEARAAAERAAQREAAKKAEDAAREAADKTRAEQEEIRKRREAAEAEARAIR). Residues 277 to 286 (PPKPVEPPKP) show a composition bias toward pro residues. Residues 298–325 (KPAGASAARPAVKKPAGAAPATTAPAGA) are compositionally biased toward low complexity. The span at 355–368 (SSGGVDRGWRGGPK) shows a compositional bias: gly residues. A tr-type G domain is found at 471 to 640 (PRPPVVTVMG…LLQAEVLELK (170 aa)). Residues 480-487 (GHVDHGKT) form a G1 region. 480–487 (GHVDHGKT) is a GTP binding site. A G2 region spans residues 505–509 (GITQH). The G3 stretch occupies residues 526 to 529 (DTPG). Residues 526-530 (DTPGH) and 580-583 (NKID) contribute to the GTP site. Positions 580–583 (NKID) are G4. The segment at 616-618 (SAK) is G5.

The protein belongs to the TRAFAC class translation factor GTPase superfamily. Classic translation factor GTPase family. IF-2 subfamily.

The protein resides in the cytoplasm. In terms of biological role, one of the essential components for the initiation of protein synthesis. Protects formylmethionyl-tRNA from spontaneous hydrolysis and promotes its binding to the 30S ribosomal subunits. Also involved in the hydrolysis of GTP during the formation of the 70S ribosomal complex. This chain is Translation initiation factor IF-2, found in Burkholderia ambifaria (strain ATCC BAA-244 / DSM 16087 / CCUG 44356 / LMG 19182 / AMMD) (Burkholderia cepacia (strain AMMD)).